The following is a 544-amino-acid chain: Probable protein kinase UbiB (544 aa).

Positions 123-501 constitute a Protein kinase domain; it reads EFDIKPLASA…KRQQATGKFL (379 aa). Residues 129-137 and K152 contribute to the ATP site; that span reads LASASIAQV. Residue D287 is the Proton acceptor of the active site. 2 helical membrane passes run 496 to 516 and 519 to 539; these read ATGK…AILV and AYEQ…LLSW.

It belongs to the ABC1 family. UbiB subfamily.

The protein resides in the cell inner membrane. The protein operates within cofactor biosynthesis; ubiquinone biosynthesis [regulation]. Its function is as follows. Is probably a protein kinase regulator of UbiI activity which is involved in aerobic coenzyme Q (ubiquinone) biosynthesis. This Vibrio campbellii (strain ATCC BAA-1116) protein is Probable protein kinase UbiB.